Consider the following 663-residue polypeptide: Protein-arginine deiminase type-1 (663 aa).

Positions 153, 155, 157, 165, 176, 179, 351, 353, 364, 371, 372, 375, 409, and 412 each coordinate Ca(2+). Cys645 (nucleophile) is an active-site residue.

Belongs to the protein arginine deiminase family. Monomer. Requires Ca(2+) as cofactor. In terms of tissue distribution, detected in epidermal keratinocytes (at protein level). Epidermis, prostate, testis, placenta, spleen and thymus.

It is found in the cytoplasm. It carries out the reaction L-arginyl-[protein] + H2O = L-citrullyl-[protein] + NH4(+). In terms of biological role, catalyzes the deimination of arginine residues of proteins. This Homo sapiens (Human) protein is Protein-arginine deiminase type-1 (PADI1).